Reading from the N-terminus, the 468-residue chain is Chromosomal replication initiator protein DnaA (468 aa).

Residues 1–84 are domain I, interacts with DnaA modulators; sequence MSSSLWLQCM…RFEVGSRPVA (84 aa). The segment at 81 to 113 is disordered; sequence RPVAAPKPAPTRTPADVAAESSAPAQLQARKPV. Residues 84-131 form a domain II region; the sequence is AAPKPAPTRTPADVAAESSAPAQLQARKPVHKTWDDDAQAIADINHRS. The domain III, AAA+ region stretch occupies residues 132 to 348; that stretch reads NVNPKHKFNN…GALNRVIANA (217 aa). Residues Gly-176, Gly-178, Lys-179, and Thr-180 each coordinate ATP. The tract at residues 349–468 is domain IV, binds dsDNA; that stretch reads NFTGRPITID…YSNLIRTLSS (120 aa).

The protein belongs to the DnaA family. As to quaternary structure, oligomerizes as a right-handed, spiral filament on DNA at oriC.

It localises to the cytoplasm. Its function is as follows. Plays an essential role in the initiation and regulation of chromosomal replication. ATP-DnaA binds to the origin of replication (oriC) to initiate formation of the DNA replication initiation complex once per cell cycle. Binds the DnaA box (a 9 base pair repeat at the origin) and separates the double-stranded (ds)DNA. Forms a right-handed helical filament on oriC DNA; dsDNA binds to the exterior of the filament while single-stranded (ss)DNA is stabiized in the filament's interior. The ATP-DnaA-oriC complex binds and stabilizes one strand of the AT-rich DNA unwinding element (DUE), permitting loading of DNA polymerase. After initiation quickly degrades to an ADP-DnaA complex that is not apt for DNA replication. Binds acidic phospholipids. The polypeptide is Chromosomal replication initiator protein DnaA (Vibrio vulnificus (strain CMCP6)).